A 116-amino-acid chain; its full sequence is Subtilisin inhibitor-like protein 4 (116 aa).

2 disulfides stabilise this stretch: cysteine 38-cysteine 53 and cysteine 74-cysteine 104.

It belongs to the protease inhibitor I16 (SSI) family. In terms of assembly, homodimer.

Its subcellular location is the secreted. In terms of biological role, inhibitor of subtilisin BPN' and trypsin. In Streptomyces lavendulae, this protein is Subtilisin inhibitor-like protein 4.